Consider the following 249-residue polypeptide: MVLLPLKKDLVPFLEPYLPDEERDADKEKPYVILTYAQSLDSRIAKIKGTRTFISHEETKTMTHYLRYKFDAIMLGCGTVMIDDPGLNCKWWPEDEKPEHLAGISPRPIILDPNCKWKFADSKMKKLYEAGDGKAPIIVVKELPSEPEEGVDYLVMRTNFTGKMDWSDMLVQLKSKFNVKSVMVEGGGIVINDLLQRPNLVDALIITLGATFLGSEGVEVSPLVEIKLKDVSWWTGDLDTVLCSRLVTH.

Residues Thr79, Asp83, Met164, and 187 to 191 (GGIVI) each bind NADP(+).

It belongs to the HTP reductase family. Homodimer.

The catalysed reaction is 2,5-diamino-6-(1-D-ribitylamino)pyrimidin-4(3H)-one 5'-phosphate + NADP(+) = 2,5-diamino-6-(1-D-ribosylamino)pyrimidin-4(3H)-one 5'-phosphate + NADPH + H(+). The enzyme catalyses 2,5-diamino-6-(1-D-ribitylamino)pyrimidin-4(3H)-one 5'-phosphate + NAD(+) = 2,5-diamino-6-(1-D-ribosylamino)pyrimidin-4(3H)-one 5'-phosphate + NADH + H(+). Its pathway is cofactor biosynthesis; riboflavin biosynthesis. Functionally, catalyzes an early step in riboflavin biosynthesis, the NADPH-dependent reduction of the ribose side chain of 2,5-diamino-6-ribosylamino-4(3H)-pyrimidinone 5'-phosphate, yielding 2,5-diamino-6-ribitylamino-4(3H)-pyrimidinone 5'-phosphate. In Kluyveromyces marxianus (Yeast), this protein is 2,5-diamino-6-ribosylamino-4(3H)-pyrimidinone 5'-phosphate reductase (RIB7).